The following is a 299-amino-acid chain: MLGGIEAGGTKFVCAVGREDGTIIDRIEFPTKMPDETIEKVIQYFSQFSLQAIGIGSFGPVDNDKTSQTYGTITATPKAGWRHYPFLQTVKNEMKIPVGFSTDVNAAALGEFLFGEAKGLDSCLYITIGTGIGAGAIVEGRLLQGLSHPEMGHIYIRRHPDDVYQGKCPYHGDCFEGLASGPAIEARWGKKAADLSDIAQVWELEGYYIAQALAQYILILAPKKIILGGGVMQQKQVFSYIYQYVPKIMNSYLDFSELSDDISDYIVPPRLGSNAGIIGTLVLAHQALQAEAASGEVRS.

Threonine 130 serves as a coordination point for ATP. Residues histidine 153, cysteine 168, histidine 171, and cysteine 174 each contribute to the Zn(2+) site. Residues proline 182 and 230–234 (GVMQQ) each bind ATP.

It belongs to the ROK (NagC/XylR) family. The cofactor is Mg(2+).

The enzyme catalyses D-fructose + ATP = D-fructose 6-phosphate + ADP + H(+). Its activity is regulated as follows. Inhibited by zinc ions. Its function is as follows. Seems to be involved in the degradation of glucomannan. In Bacillus subtilis (strain 168), this protein is Putative fructokinase (gmuE).